Consider the following 446-residue polypeptide: MSVIVSDRRTLIVGLGKTGLSCVRYLSGQGREIAVADSRLQPPGLDELKAGWPDVPVYLGDFDEALFAGFNELVVSPGISIAEPAIAGAAARGARIRGDIDLFADAADAPIIAITGSNGKTTVTTLVGEMARAAGRNVQVGGNIGTPALDLLEQGADLYVLELSSFQLETTEELGALAATVLNVSDDHMDRYPDKMAYFQAKQRIYRGCKNAIVNLDDALSTPMARDTLRFLCFGFNRVNPETFSTRDDDEGTWITWGLENLLLASELQLMGRHNISNVMAALALGYAAGLAMEPMLEVARRFRGLPHRCESVRNLDGVDYINDSKGTNVGATVAAIESLVPESGKVILIAGGDGKGADFQPLAEPVAACCRALVLIGRDAGKISRAVGASVPQHRATSLQEAVSLARQAAEPGDRVLLSPACASFDMFRDYNDRGEQFRTLVEGL.

Residue 116 to 122 (GSNGKTT) participates in ATP binding.

Belongs to the MurCDEF family.

The protein resides in the cytoplasm. The catalysed reaction is UDP-N-acetyl-alpha-D-muramoyl-L-alanine + D-glutamate + ATP = UDP-N-acetyl-alpha-D-muramoyl-L-alanyl-D-glutamate + ADP + phosphate + H(+). The protein operates within cell wall biogenesis; peptidoglycan biosynthesis. Its function is as follows. Cell wall formation. Catalyzes the addition of glutamate to the nucleotide precursor UDP-N-acetylmuramoyl-L-alanine (UMA). The sequence is that of UDP-N-acetylmuramoylalanine--D-glutamate ligase from Marinobacter nauticus (strain ATCC 700491 / DSM 11845 / VT8) (Marinobacter aquaeolei).